A 115-amino-acid chain; its full sequence is T cell receptor beta variable 7-4 (115 aa).

Positions 1–21 (MGTRLLCWVVLGFLGTDHTGA) are cleaved as a signal peptide. Residues 22–115 (GVSQSPRYKV…SAVYLCASSL (94 aa)) enclose the Ig-like domain. Residues Cys-42 and Cys-111 are joined by a disulfide bond. The tract at residues 67-97 (YSQSDAQRDKSGRPSGRFSAERPERSVSTLK) is disordered.

Alpha-beta TR is a heterodimer composed of an alpha and beta chain; disulfide-linked. The alpha-beta TR is associated with the transmembrane signaling CD3 coreceptor proteins to form the TR-CD3 (TcR or TCR). The assembly of alpha-beta TR heterodimers with CD3 occurs in the endoplasmic reticulum where a single alpha-beta TR heterodimer associates with one CD3D-CD3E heterodimer, one CD3G-CD3E heterodimer and one CD247 homodimer forming a stable octameric structure. CD3D-CD3E and CD3G-CD3E heterodimers preferentially associate with TR alpha and TR beta chains, respectively. The association of the CD247 homodimer is the last step of TcR assembly in the endoplasmic reticulum and is required for transport to the cell surface.

The protein localises to the cell membrane. Functionally, v region of the variable domain of T cell receptor (TR) beta chain that participates in the antigen recognition. Alpha-beta T cell receptors are antigen specific receptors which are essential to the immune response and are present on the cell surface of T lymphocytes. Recognize peptide-major histocompatibility (MH) (pMH) complexes that are displayed by antigen presenting cells (APC), a prerequisite for efficient T cell adaptive immunity against pathogens. Binding of alpha-beta TR to pMH complex initiates TR-CD3 clustering on the cell surface and intracellular activation of LCK that phosphorylates the ITAM motifs of CD3G, CD3D, CD3E and CD247 enabling the recruitment of ZAP70. In turn ZAP70 phosphorylates LAT, which recruits numerous signaling molecules to form the LAT signalosome. The LAT signalosome propagates signal branching to three major signaling pathways, the calcium, the mitogen-activated protein kinase (MAPK) kinase and the nuclear factor NF-kappa-B (NF-kB) pathways, leading to the mobilization of transcription factors that are critical for gene expression and essential for T cell growth and differentiation. The T cell repertoire is generated in the thymus, by V-(D)-J rearrangement. This repertoire is then shaped by intrathymic selection events to generate a peripheral T cell pool of self-MH restricted, non-autoaggressive T cells. Post-thymic interaction of alpha-beta TR with the pMH complexes shapes TR structural and functional avidity. This is T cell receptor beta variable 7-4 from Homo sapiens (Human).